Reading from the N-terminus, the 262-residue chain is Aquaporin TIP3-1 (262 aa).

2 helical membrane-spanning segments follow: residues 27–47 (AAIS…GSVL) and 61–81 (GLVA…AVAV). An NPA 1 motif is present at residues 89–91 (NPA). A run of 3 helical transmembrane segments spans residues 104 to 124 (LVRA…ATLL), 148 to 168 (AVLL…ATVI), and 175 to 195 (VGTI…LAGG). The NPA 2 motif lies at 203-205 (NPA). A helical transmembrane segment spans residues 223–243 (YWLGPFLGAGLAGLVYEYLVI).

It belongs to the MIP/aquaporin (TC 1.A.8) family. TIP (TC 1.A.8.10) subfamily.

Its subcellular location is the vacuole membrane. Its function is as follows. Aquaporins facilitate the transport of water and small neutral solutes across cell membranes. The sequence is that of Aquaporin TIP3-1 (TIP3-1) from Zea mays (Maize).